The primary structure comprises 289 residues: Nitrogenase iron protein (289 aa).

G8–S15 lines the ATP pocket. C96 is a [4Fe-4S] cluster binding site. Residue R99 is modified to ADP-ribosylarginine; by dinitrogenase reductase ADP-ribosyltransferase. C130 lines the [4Fe-4S] cluster pocket.

Belongs to the NifH/BchL/ChlL family. In terms of assembly, homodimer. It depends on [4Fe-4S] cluster as a cofactor. In terms of processing, the reversible ADP-ribosylation of Arg-99 inactivates the nitrogenase reductase and regulates nitrogenase activity.

It carries out the reaction N2 + 8 reduced [2Fe-2S]-[ferredoxin] + 16 ATP + 16 H2O = H2 + 8 oxidized [2Fe-2S]-[ferredoxin] + 2 NH4(+) + 16 ADP + 16 phosphate + 6 H(+). In terms of biological role, the key enzymatic reactions in nitrogen fixation are catalyzed by the nitrogenase complex, which has 2 components: the iron protein and the molybdenum-iron protein. The chain is Nitrogenase iron protein from Parafrankia sp. (strain EAN1pec).